We begin with the raw amino-acid sequence, 123 residues long: U11/U12 small nuclear ribonucleoprotein 25 kDa protein (123 aa).

The 92-residue stretch at 32 to 123 (MTVRVCKMDG…VSFIKKLRQK (92 aa)) folds into the Ubiquitin-like domain.

Component of the U11/U12 snRNPs that are part of the U12-type spliceosome.

Its subcellular location is the nucleus. The sequence is that of U11/U12 small nuclear ribonucleoprotein 25 kDa protein (SNRNP25) from Bos taurus (Bovine).